The following is a 432-amino-acid chain: GTPase Obg (432 aa).

An Obg domain is found at 1-159 (MKFIDTAKFT…YEVKAELKVL (159 aa)). The OBG-type G domain maps to 160-332 (ADVGFVGLPN…LLLKIAKELE (173 aa)). GTP-binding positions include 166-173 (GLPNAGKS), 191-195 (FTTLN), 213-216 (DLPG), 284-287 (NKMD), and 313-315 (SGL). Residues S173 and T193 each contribute to the Mg(2+) site. The region spanning 354-432 (RLEEDEEDIQ…VFEYELEWMD (79 aa)) is the OCT domain.

This sequence belongs to the TRAFAC class OBG-HflX-like GTPase superfamily. OBG GTPase family. As to quaternary structure, monomer. The cofactor is Mg(2+).

Its subcellular location is the cytoplasm. In terms of biological role, an essential GTPase which binds GTP, GDP and possibly (p)ppGpp with moderate affinity, with high nucleotide exchange rates and a fairly low GTP hydrolysis rate. Plays a role in control of the cell cycle, stress response, ribosome biogenesis and in those bacteria that undergo differentiation, in morphogenesis control. This chain is GTPase Obg, found in Mesoplasma florum (strain ATCC 33453 / NBRC 100688 / NCTC 11704 / L1) (Acholeplasma florum).